Consider the following 317-residue polypeptide: Transaldolase (317 aa).

Catalysis depends on Lys-132, which acts as the Schiff-base intermediate with substrate.

The protein belongs to the transaldolase family. Type 1 subfamily. In terms of assembly, homodimer.

The protein localises to the cytoplasm. It carries out the reaction D-sedoheptulose 7-phosphate + D-glyceraldehyde 3-phosphate = D-erythrose 4-phosphate + beta-D-fructose 6-phosphate. It functions in the pathway carbohydrate degradation; pentose phosphate pathway; D-glyceraldehyde 3-phosphate and beta-D-fructose 6-phosphate from D-ribose 5-phosphate and D-xylulose 5-phosphate (non-oxidative stage): step 2/3. Functionally, transaldolase is important for the balance of metabolites in the pentose-phosphate pathway. This chain is Transaldolase, found in Shewanella frigidimarina (strain NCIMB 400).